The sequence spans 347 residues: NADH-quinone oxidoreductase subunit H (347 aa).

The next 8 helical transmembrane spans lie at 21 to 41 (IAGILLIALPLMLGVAMIIYA), 87 to 107 (GLFLIAPIITFTVALMAWAVI), 120 to 140 (VGLLYVLAISSLGVYGVVIAG), 160 to 180 (ISYEVSIGFILICVVLWAGTF), 194 to 214 (WIINGFVANPLLFPMWVMFLI), 259 to 279 (LLMCALNAVLFWGGYLPPLDI), 282 to 302 (LYLVPGFVWLLLKILFFFFIF), and 324 to 344 (VFLPVSLLFVFLVSGYLMATG).

Belongs to the complex I subunit 1 family. As to quaternary structure, NDH-1 is composed of 14 different subunits. Subunits NuoA, H, J, K, L, M, N constitute the membrane sector of the complex.

Its subcellular location is the cell inner membrane. It carries out the reaction a quinone + NADH + 5 H(+)(in) = a quinol + NAD(+) + 4 H(+)(out). In terms of biological role, NDH-1 shuttles electrons from NADH, via FMN and iron-sulfur (Fe-S) centers, to quinones in the respiratory chain. The immediate electron acceptor for the enzyme in this species is believed to be ubiquinone. Couples the redox reaction to proton translocation (for every two electrons transferred, four hydrogen ions are translocated across the cytoplasmic membrane), and thus conserves the redox energy in a proton gradient. This subunit may bind ubiquinone. This chain is NADH-quinone oxidoreductase subunit H, found in Novosphingobium aromaticivorans (strain ATCC 700278 / DSM 12444 / CCUG 56034 / CIP 105152 / NBRC 16084 / F199).